Reading from the N-terminus, the 857-residue chain is RNA-directed RNA polymerase 2a (857 aa).

The RdRp catalytic domain maps to lysine 511–serine 624. Residues isoleucine 780–arginine 789 show a composition bias toward basic and acidic residues. Positions isoleucine 780–alanine 857 are disordered. 2 stretches are compositionally biased toward polar residues: residues lysine 804–glutamine 816 and phenylalanine 824–serine 840.

The protein belongs to the ssRNA positive-strand viruses RNA-directed RNA polymerase family. As to quaternary structure, interacts with replication protein 1a.

It catalyses the reaction RNA(n) + a ribonucleoside 5'-triphosphate = RNA(n+1) + diphosphate. Functionally, RNA-dependent RNA polymerase which replicates the viral genome composed of 3 RNA segments, RNA1, RNA2 and RNA3. This Cucumber mosaic virus (strain MB-8) (CMV) protein is RNA-directed RNA polymerase 2a.